A 144-amino-acid polypeptide reads, in one-letter code: Large ribosomal subunit protein uL11 (144 aa).

The protein belongs to the universal ribosomal protein uL11 family. As to quaternary structure, part of the ribosomal stalk of the 50S ribosomal subunit. Interacts with L10 and the large rRNA to form the base of the stalk. L10 forms an elongated spine to which L12 dimers bind in a sequential fashion forming a multimeric L10(L12)X complex. Post-translationally, one or more lysine residues are methylated.

Its function is as follows. Forms part of the ribosomal stalk which helps the ribosome interact with GTP-bound translation factors. The polypeptide is Large ribosomal subunit protein uL11 (Polaromonas naphthalenivorans (strain CJ2)).